The primary structure comprises 440 residues: tRNA(Ile)-lysidine synthase (440 aa).

Residue 19 to 24 (SGGLDS) coordinates ATP.

The protein belongs to the tRNA(Ile)-lysidine synthase family.

It localises to the cytoplasm. The enzyme catalyses cytidine(34) in tRNA(Ile2) + L-lysine + ATP = lysidine(34) in tRNA(Ile2) + AMP + diphosphate + H(+). Ligates lysine onto the cytidine present at position 34 of the AUA codon-specific tRNA(Ile) that contains the anticodon CAU, in an ATP-dependent manner. Cytidine is converted to lysidine, thus changing the amino acid specificity of the tRNA from methionine to isoleucine. The protein is tRNA(Ile)-lysidine synthase of Buchnera aphidicola subsp. Acyrthosiphon pisum (strain APS) (Acyrthosiphon pisum symbiotic bacterium).